The primary structure comprises 400 residues: Snake venom metalloproteinase H3 (400 aa).

An N-terminal signal peptide occupies residues 1 to 6 (FPYQGS). The propeptide occupies 7-176 (SIILESGNVN…KKASQLIVST (170 aa)). In terms of domain architecture, Peptidase M12B spans 180–377 (KYMEIVIVVD…ENPPCILNKP (198 aa)). The Ca(2+) site is built by E183 and D267. 3 cysteine pairs are disulfide-bonded: C291–C372, C331–C356, and C333–C339. Residue H316 participates in Zn(2+) binding. Residue E317 is part of the active site. The Zn(2+) site is built by H320 and H326. Ca(2+) contacts are provided by C372, N375, V387, N390, L392, E394, and D400. The propeptide occupies 378–400 (LRTDTVSTPVSGNELLEAGKDYD).

It belongs to the venom metalloproteinase (M12B) family. P-I subfamily. Monomer. Zn(2+) is required as a cofactor. In terms of tissue distribution, expressed by the venom gland.

It is found in the secreted. In terms of biological role, snake venom metalloproteinase that impairs hemostasis in the envenomed animal. The polypeptide is Snake venom metalloproteinase H3 (Deinagkistrodon acutus (Hundred-pace snake)).